We begin with the raw amino-acid sequence, 3241 residues long: MSQRGKRGNQQHHQSHHPPPQQHQRKDVEPQPPPTKRRKGRPPNGATTAAVAEVTGSGPATGSERVPVLPLCKSKHEEPGAEAGGGGQGRAAAGATSTSKSKSTKLAKSASKCKSQGASSSSSWQARSVADIKMSSIYNRSSTEAPAELYRKDLISAMKLPDSEPLANYEYLIVTDPWKQEWEKGVQVPVNPDSLPEPCVYVLPEPVVSPAHDFKLPKNRYLRITKDEHYSPDLHYLTNVVALAENTCAYDIDPIDEAWLRLYNSDRAQCGAFPINATQFERVIEELEVRCWEQIQVILKLEEGLGIEFDENVICDVCRSPDSEEANEMVFCDNCNICVHQACYGITAIPSGQWLCRTCSMGIKPDCVLCPNKGGAMKSNKSGKHWAHVSCALWIPEVSIGCVDRMEPITKISSIPQSRWSLICVLCRKRVGSCIQCSVKPCKTAYHVTCAFQHGLEMRAIIEEGNAEDGVKLRSYCQKHSMSKGKKENAGSHGGGSASVASAMQKANRYGSGAGGGADDGNNACGTTGEDPRRRKNHRKTELTSEERNQARAQRLQEVEAEFDKHVNFNDISCHLFDVDDDAIVAIYNYWKLKRKSRHNRELIPPKSEDVEMIARKQEQQDMENHKLVVHLRQDLERVRNLCYMVSRREKLSRSLFKLREQVFYKQLGVLDEMRLEKQQTKQEQQQPVMDLNAVIYANDGPTLYDRFYSSVGGQTVPAQYQDLKYILEQLMGKLQSGKQGRGRASQSPNKRKQPAKASPNKKLNNGILSSRTSSPEKTVAGSKVGTTTSKVRSPPGKNPTGRRASKSSAAAATSTHNKSQFHSNIRSSTTSHSSSGTISSGNSSSANGTSSSDSSSGSDSGSESGSSSAGSGVSKRKSSSGSPLKKQSYARSVEQRQKQRQRRQNEAVAGASATYPDSRSASSSSDGEDERCRNRQEPERGARRGPIQSKSVPNRSQASRSKPTTEADVGEGTGASARRKLSTTTRGLAQMDKDADESVSSDESEELLPLRGERQRESTTTSGLATTGSAIGRNLGQHIYSDSESSSSEQEKDQEEQATVESNVSDSQNQQTIRTKAAMKEFVPGTAATTSSTSQAASSTSKAKNTREGKEGAASIGNSTKTKPNPNAKLYPADLLVVPQRQAAKKASENMRSTNLATTLQPDVSDRVREPDINSISGTAKSKVKDSSSRVSNEADKSSLEKVRPKEHLQKTVGKTSESAPAERGKRGRPPKVPKDARPPSITENDKPALPTHTQSKPPSVVATPVSAKSNFAVSLVPQRQAAKKAAEQLKSSKPVLESFSTGNDISDKETVTSATISGSGSSVPAASTPVKPTRRSSIKEAPITPKEPLSGRRKSKEDLLATPIKTTPLVKRRVVVPNLSSSSSGDSESSSSSSSSGSSSSSGGSDSDSESQASNSENPSSREPPVAPAKVPSDSSLVPKRSPRKSMDKPSALTIAPASVNVLNIPSTRSRQNSTTKSTKVALQKAVQSVEDDVKCTPKTNRLQGSMDECGKQVQLEQATKRATRGSKSRPPSPTAKSSPEKTVSRCKSRAEESPKKVANLEQEISQRKVASGKGTSSLDKLLNKKQQQMNHSAQATPPPISPTPPASETRIVKDQCDLKPDEVSIQQINLGADAQPEPDLDPESAAEAGELPMDIDEELTTAPTRTQLSASASKLADIIDDERPPAAPLPASPTPTPTSNDEMSDAGSDLSERRRMRWRSRRRRRRRSHEPDEEHTHHTQHLLNEMEMARELEEERKNELLANASKYSASTSSPAVTVIPPDPPEIIELDSNSAEQQQQHLHDQPLPPPLVVQSPAADVVPTVMQQQLLPSQRPLIEQLPVEHLPIVETILEMEDSKFANNFASNLASVLNPPNQMSLIGSSIDRSKQISEEDSIQATRNLLEKLRKTKRKAQDDCSSKEAVDLLPPTPAIPSVFPFHNAADPEDIIHAQKEQQHQQQQQLQSSQTCIYGNSSGPNSVASLTIKDSPMTANSGSYANSLTNTPNATPTNATMNNLGYQVNFPNSQPPPTLGLFLEKSPHQKGACPLSSNGGANVGQPAPTPDFVDLAAAAVKNTLGSFRGAATVPTQSGTGVNAKINDYDESTRMQSPFGGMPWNESDLIAERRSSSPSSVSESNDPPQPPPVVTATATTARSLAQLESCKNFFNSYPSGNAGPGTAANATAPFNHPPMVNGIDSIPMFNNTNTTQHQPTTPAHQQQQQRTPNNQYNGTIYPQLAGIMHPQTTPTEPPSSLYGNGGVGGAVQSTTLPPPAQVNQYPGTPYSATTLGMISVQQPALSTVPVQTATTPNNPFTLTSPIDGKMPTYPAQLLSSCAEAVVASMMPPTPPVTATAKDSPSKRTSVSGSNLSKKQTHKSPQLPQGKSPGKSPRQPLQPPTPPAPVPVVALPPTKYDPQTHTLQGKPRQRAPRGSGGSGAPGRGRGRGRGRGRGGGVTSGMAMVLPPPMSDYGSNTHIVNNLVGTPFEFNNEFDDMAGPGVENLQSLRDRRRSFELRAPRVQNKPTTTPTTATTTNPLLHPVLPGPVDMRTYNLGFEAPHSTASQEAYQNNLLGAFDSGTADQTLSEFNEEDERQFQSALRATGTGTSPSKQHSGPTALVAPPTGPNPTPAPNLLLHCTEANQMAPNVAATGAATHLVEGSLVEASLEATSEEVSIDSDSTIPHSKTSTSDARSQIKLKIKSPMAYPEHYNAMTNSSSLTLTSTLVQSSNVVQTTVSTSTVVSASSAVSGNSRRMRKKELLSLYVVQKDNHNDDSSCGLPAASDTLPLENLRKSEEEDELSGGNGTKRFKKNSSSRELRALDANLALVEEQLLSSGAGACGGGSSGDGRRRSACSSGSNNDNNGKTGAASSAGKRRGRSKTLESSEDDHQAPKLKIKIRGLTANETPSGVSSVDEGQNYSYEMTRRACPPKKRLTSNFSTLTLEEIKRDSMNYRKKVMQDFVKGEDSNKRGVVVKDGESLIMPQPPTKRPKSSKPKKEKKEKKRQKQQQLILSSSTTTMTTTLIENTASASPGDKPKLILRFGKRKAETTTRTASLEQPPTLEAPAPLRFKIARNSSGGGYIIGTKAEKKDESTADNTSPITELPLISPLREASPQGRLLNSFTPHSQNANTSPALLGKDTGTPSPPCLVIDSSKSADVHDSTSLPESGEAAMGVQSSLVNATTPLCVNVGNYENSNNSLPSASGTGSASSNSCNSNSINNNGSGGGRASGEGGLLPLKKDCEVR.

Residues 1–16 (MSQRGKRGNQQHHQSH) are compositionally biased toward basic residues. Residues 1-126 (MSQRGKRGNQ…GASSSSSWQA (126 aa)) form a disordered region. 2 stretches are compositionally biased toward low complexity: residues 42 to 55 (PPNG…AEVT) and 90 to 126 (RAAA…SWQA). A PHD-type 1 zinc finger spans residues 312 to 362 (NVICDVCRSPDSEEANEMVFCDNCNICVHQACYGITAIPSGQWLCRTCSMG). The segment at 364 to 398 (KPDCVLCPNKGGAMKSNKSGKHWAHVSCALWIPEV) adopts a C2HC pre-PHD-type zinc-finger fold. The segment at 422–481 (LICVLCRKRVGSCIQCSVKPCKTAYHVTCAFQHGLEMRAIIEEGNAEDGVKLRSYCQKHS) adopts a PHD-type 2 zinc-finger fold. Disordered regions lie at residues 482–501 (MSKG…ASVA), 508–554 (NRYG…ARAQ), 737–1266 (SGKQ…VATP), 1279–1483 (PQRQ…STKV), 1500–1613 (PKTN…SETR), and 1632–1746 (NLGA…QHLL). Basic and acidic residues predominate over residues 540-554 (KTELTSEERNQARAQ). Residues 762–777 (KKLNNGILSSRTSSPE) are compositionally biased toward polar residues. The span at 807–874 (KSSAAAATST…SGSSSAGSGV (68 aa)) shows a compositional bias: low complexity. Positions 931-943 (ERCRNRQEPERGA) are enriched in basic and acidic residues. Polar residues predominate over residues 949-965 (QSKSVPNRSQASRSKPT). Acidic residues predominate over residues 995 to 1007 (DADESVSSDESEE). The segment covering 1019 to 1031 (STTTSGLATTGSA) has biased composition (low complexity). The segment covering 1060–1075 (TVESNVSDSQNQQTIR) has biased composition (polar residues). Residues 1087–1104 (TAATTSSTSQAASSTSKA) are compositionally biased toward low complexity. Polar residues-rich tracts occupy residues 1117–1126 (IGNSTKTKPN) and 1151–1163 (NMRS…TLQP). Basic and acidic residues predominate over residues 1184–1211 (KVKDSSSRVSNEADKSSLEKVRPKEHLQ). A compositionally biased stretch (polar residues) spans 1313–1327 (VTSATISGSGSSVPA). At threonine 1346 the chain carries Phosphothreonine. Serine 1352 carries the post-translational modification Phosphoserine. Threonine 1364 bears the Phosphothreonine mark. The span at 1382–1426 (SSSSSGDSESSSSSSSSGSSSSSGGSDSDSESQASNSENPSSREP) shows a compositional bias: low complexity. At threonine 1456 the chain carries Phosphothreonine. Over residues 1463 to 1483 (NVLNIPSTRSRQNSTTKSTKV) the composition is skewed to polar residues. The segment covering 1541–1558 (SPEKTVSRCKSRAEESPK) has biased composition (basic and acidic residues). The span at 1576–1594 (KGTSSLDKLLNKKQQQMNH) shows a compositional bias: polar residues. A compositionally biased stretch (pro residues) spans 1599 to 1608 (TPPPISPTPP). Positions 1664 to 1675 (TAPTRTQLSASA) are enriched in polar residues. Over residues 1688 to 1699 (PAAPLPASPTPT) the composition is skewed to pro residues. Over residues 1717–1731 (RRMRWRSRRRRRRRS) the composition is skewed to basic residues. Coiled coils occupy residues 1741–1770 (HTQH…ASKY) and 1893–1925 (SEED…KEAV). Disordered regions lie at residues 2037–2061 (LEKS…GQPA), 2124–2148 (AERR…PVVT), 2203–2227 (NNTN…TPNN), 2346–2454 (TPPV…GGVT), 2598–2629 (ATGT…PAPN), 2667–2691 (SEEV…ARSQ), 2768–2811 (NDDS…NSSS), 2832–2911 (GAGA…SVDE), 2964–3015 (NKRG…TTTM), 3042–3169 (KAET…EAAM), and 3184–3241 (VNVG…CEVR). A compositionally biased stretch (polar residues) spans 2359–2381 (KRTSVSGSNLSKKQTHKSPQLPQ). Residues 2392-2402 (PLQPPTPPAPV) are compositionally biased toward pro residues. The segment covering 2430 to 2439 (GSGGSGAPGR) has biased composition (gly residues). Polar residues-rich tracts occupy residues 2598 to 2611 (ATGT…QHSG) and 2673 to 2689 (DSDS…SDAR). Polar residues predominate over residues 2855–2865 (NNDNNGKTGAA). Over residues 2876 to 2887 (KTLESSEDDHQA) the composition is skewed to basic and acidic residues. 2 positions are modified to phosphoserine: serine 2880 and serine 2881. A compositionally biased stretch (polar residues) spans 2899–2911 (ANETPSGVSSVDE). A compositionally biased stretch (basic and acidic residues) spans 2964 to 2974 (NKRGVVVKDGE). Positions 2984 to 3002 (KRPKSSKPKKEKKEKKRQK) are enriched in basic residues. The span at 3003–3015 (QQQLILSSSTTTM) shows a compositional bias: low complexity. Residues serine 3104 and serine 3110 each carry the phosphoserine modification. 2 stretches are compositionally biased toward polar residues: residues 3115–3130 (LLNS…NTSP) and 3184–3197 (VNVG…NSLP). The segment covering 3198–3218 (SASGTGSASSNSCNSNSINNN) has biased composition (low complexity). Positions 3219–3230 (GSGGGRASGEGG) are enriched in gly residues.

This sequence belongs to the JADE family.

It is found in the nucleus. In terms of biological role, may function as a negative regulator of the EGFR/Ras/MAPK signaling pathway during eye development. The protein is PHD finger protein rhinoceros (rno) of Drosophila melanogaster (Fruit fly).